A 417-amino-acid chain; its full sequence is MKAVVLGSGVVGLMSAWYLQKSGYQVTVVDRQARSAEETSFANAGQISYGYSSPWAAPGIPQKALRWLMEEHAPLKIKPSLDPQLLKWATQMLANCQLSRYQVNKARMLAIANHSRECLSQLRQEHDIEYQGRQQGTLQIFRTQKQLIAIEKDIALLEQSGTRYQRMSVDECIKQEPGLAAVSHKLTGGLYLPDDETGDCYLFCQQMTELAQQQGVTFLFNTNVKKVNAQGNQVVSVSTDAGELQADVYVVAMGSYSTALLAQLGITIPVYPVKGYSLTVPITDESQAPVSTVMDETYKVALTRFDDRIRVAGTAELAGFDPAIPEKRKATISMVVNDLFPHSGDFAKAEFWTGFRPMTPDGTPLIGKTPLKNLYTNTGHGTLGWTMACGSGHLLSQIITGEQSENQAGLDLFRYAS.

3–17 (AVVLGSGVVGLMSAW) contributes to the FAD binding site.

It belongs to the DadA oxidoreductase family. The cofactor is FAD.

The enzyme catalyses a D-alpha-amino acid + A + H2O = a 2-oxocarboxylate + AH2 + NH4(+). In terms of biological role, oxidative deamination of D-amino acids. The polypeptide is D-amino acid dehydrogenase (Vibrio vulnificus (strain YJ016)).